Consider the following 229-residue polypeptide: Ribose-5-phosphate isomerase A (229 aa).

Substrate contacts are provided by residues 28-31 (TGST), 85-88 (DGAD), and 98-101 (KGRG). The Proton acceptor role is filled by Glu-107. Lys-125 lines the substrate pocket.

This sequence belongs to the ribose 5-phosphate isomerase family. In terms of assembly, homodimer.

The enzyme catalyses aldehydo-D-ribose 5-phosphate = D-ribulose 5-phosphate. Its pathway is carbohydrate degradation; pentose phosphate pathway; D-ribose 5-phosphate from D-ribulose 5-phosphate (non-oxidative stage): step 1/1. Its function is as follows. Catalyzes the reversible conversion of ribose-5-phosphate to ribulose 5-phosphate. The chain is Ribose-5-phosphate isomerase A from Thermococcus kodakarensis (strain ATCC BAA-918 / JCM 12380 / KOD1) (Pyrococcus kodakaraensis (strain KOD1)).